A 625-amino-acid polypeptide reads, in one-letter code: MKYSAGDFDVVVIGAGHAGCEAALASARMGCKTLICTMNLDSIALMACNPNIGGTAKGHLVREIDALGGEMGINIDHTFIQSRMLNTSKGPAVHSLRAQADKKRYSERMKHLLEKEDNVVLRQLEVIEIDVEDNEVKGVLTKNGAYFTTKAIILCTGTYLKGKIIIGDIIYSSGPSGLYPANDLSQSLLDLGINLRRFKTGTPARINKRSVDFSKMIEQPGDEKIVPFSFIHNKLDKDQISCYLTYTSEETHKIIHENIHRSPLYNGSIEGVGPRYCPSIEDKIVRFPDKDKHQIFIEPEGENTEELYVGGMSSSLPEDVQIKMYRSVPGLENAEILRTAYAIEYDCIDPQQLDLTLEFKNINGLYGAGQFNGSSGYEEAAAQGLIAGINAVLKIKEKNPLILKRSDAYIGVLIDDLVTKGTNEPYRMMTSRAEYRLLLRQDNADLRLTELGYKVGLVKEDRYNKFLNRKKNVENEIERLRNMQITGKREINEFLLEKGSTELKKPISLYELIKRPELDYFKVESLDDKRPSLSDDEKEEINIIAKYEGYINKQLEQVEQFKKYEDRLIPKSINYLDIKGLRLEAIQKLEKIKPINIGQASRISGVSPADISVLLIYMERKNREN.

Position 14–19 (14–19 (GAGHAG)) interacts with FAD. 273-287 (GPRYCPSIEDKIVRF) provides a ligand contact to NAD(+).

The protein belongs to the MnmG family. As to quaternary structure, homodimer. Heterotetramer of two MnmE and two MnmG subunits. FAD is required as a cofactor.

It is found in the cytoplasm. Functionally, NAD-binding protein involved in the addition of a carboxymethylaminomethyl (cmnm) group at the wobble position (U34) of certain tRNAs, forming tRNA-cmnm(5)s(2)U34. The chain is tRNA uridine 5-carboxymethylaminomethyl modification enzyme MnmG from Clostridium botulinum (strain Hall / ATCC 3502 / NCTC 13319 / Type A).